Reading from the N-terminus, the 332-residue chain is Holliday junction branch migration complex subunit RuvB (332 aa).

A large ATPase domain (RuvB-L) region spans residues 1–181; that stretch reads MTRFLDSDAM…FGITGHMEYY (181 aa). Residues L20, R21, G62, K65, T66, T67, 128-130, R171, Y181, and R218 contribute to the ATP site; that span reads EDF. T66 is a Mg(2+) binding site. Residues 182-252 form a small ATPAse domain (RuvB-S) region; sequence EENDLTEIIE…ITDKALTMLD (71 aa). The head domain (RuvB-H) stretch occupies residues 255-332; sequence HEGLDYVDQK…EHLGYQRFDK (78 aa). The DNA site is built by R291, R310, R312, and R315.

It belongs to the RuvB family. In terms of assembly, homohexamer. Forms an RuvA(8)-RuvB(12)-Holliday junction (HJ) complex. HJ DNA is sandwiched between 2 RuvA tetramers; dsDNA enters through RuvA and exits via RuvB. An RuvB hexamer assembles on each DNA strand where it exits the tetramer. Each RuvB hexamer is contacted by two RuvA subunits (via domain III) on 2 adjacent RuvB subunits; this complex drives branch migration. In the full resolvosome a probable DNA-RuvA(4)-RuvB(12)-RuvC(2) complex forms which resolves the HJ.

It localises to the cytoplasm. The enzyme catalyses ATP + H2O = ADP + phosphate + H(+). The RuvA-RuvB-RuvC complex processes Holliday junction (HJ) DNA during genetic recombination and DNA repair, while the RuvA-RuvB complex plays an important role in the rescue of blocked DNA replication forks via replication fork reversal (RFR). RuvA specifically binds to HJ cruciform DNA, conferring on it an open structure. The RuvB hexamer acts as an ATP-dependent pump, pulling dsDNA into and through the RuvAB complex. RuvB forms 2 homohexamers on either side of HJ DNA bound by 1 or 2 RuvA tetramers; 4 subunits per hexamer contact DNA at a time. Coordinated motions by a converter formed by DNA-disengaged RuvB subunits stimulates ATP hydrolysis and nucleotide exchange. Immobilization of the converter enables RuvB to convert the ATP-contained energy into a lever motion, pulling 2 nucleotides of DNA out of the RuvA tetramer per ATP hydrolyzed, thus driving DNA branch migration. The RuvB motors rotate together with the DNA substrate, which together with the progressing nucleotide cycle form the mechanistic basis for DNA recombination by continuous HJ branch migration. Branch migration allows RuvC to scan DNA until it finds its consensus sequence, where it cleaves and resolves cruciform DNA. The chain is Holliday junction branch migration complex subunit RuvB from Streptococcus agalactiae serotype V (strain ATCC BAA-611 / 2603 V/R).